We begin with the raw amino-acid sequence, 483 residues long: Probable glycine dehydrogenase (decarboxylating) subunit 2 (483 aa).

Residue K264 is modified to N6-(pyridoxal phosphate)lysine.

This sequence belongs to the GcvP family. C-terminal subunit subfamily. The glycine cleavage system is composed of four proteins: P, T, L and H. In this organism, the P 'protein' is a heterodimer of two subunits. It depends on pyridoxal 5'-phosphate as a cofactor.

It carries out the reaction N(6)-[(R)-lipoyl]-L-lysyl-[glycine-cleavage complex H protein] + glycine + H(+) = N(6)-[(R)-S(8)-aminomethyldihydrolipoyl]-L-lysyl-[glycine-cleavage complex H protein] + CO2. Its function is as follows. The glycine cleavage system catalyzes the degradation of glycine. The P protein binds the alpha-amino group of glycine through its pyridoxal phosphate cofactor; CO(2) is released and the remaining methylamine moiety is then transferred to the lipoamide cofactor of the H protein. The sequence is that of Probable glycine dehydrogenase (decarboxylating) subunit 2 from Nitrosomonas eutropha (strain DSM 101675 / C91 / Nm57).